The sequence spans 548 residues: 2-succinyl-5-enolpyruvyl-6-hydroxy-3-cyclohexene-1-carboxylate synthase (548 aa).

This sequence belongs to the TPP enzyme family. MenD subfamily. As to quaternary structure, homodimer. The cofactor is Mg(2+). Requires Mn(2+) as cofactor. Thiamine diphosphate is required as a cofactor.

It carries out the reaction isochorismate + 2-oxoglutarate + H(+) = 5-enolpyruvoyl-6-hydroxy-2-succinyl-cyclohex-3-ene-1-carboxylate + CO2. It participates in quinol/quinone metabolism; 1,4-dihydroxy-2-naphthoate biosynthesis; 1,4-dihydroxy-2-naphthoate from chorismate: step 2/7. It functions in the pathway quinol/quinone metabolism; menaquinone biosynthesis. Its function is as follows. Catalyzes the thiamine diphosphate-dependent decarboxylation of 2-oxoglutarate and the subsequent addition of the resulting succinic semialdehyde-thiamine pyrophosphate anion to isochorismate to yield 2-succinyl-5-enolpyruvyl-6-hydroxy-3-cyclohexene-1-carboxylate (SEPHCHC). This Mycobacterium ulcerans (strain Agy99) protein is 2-succinyl-5-enolpyruvyl-6-hydroxy-3-cyclohexene-1-carboxylate synthase.